The chain runs to 213 residues: Thymidylate kinase (213 aa).

Position 10–17 (10–17 (GLEGAGKT)) interacts with ATP.

The protein belongs to the thymidylate kinase family.

It catalyses the reaction dTMP + ATP = dTDP + ADP. In terms of biological role, phosphorylation of dTMP to form dTDP in both de novo and salvage pathways of dTTP synthesis. In Salmonella choleraesuis (strain SC-B67), this protein is Thymidylate kinase.